The sequence spans 734 residues: Photosystem I P700 chlorophyll a apoprotein A2 (734 aa).

8 consecutive transmembrane segments (helical) span residues 46 to 69, 135 to 158, 175 to 199, 273 to 291, 330 to 353, 369 to 395, 417 to 439, and 517 to 535; these read IFASHLGQLAIIFLWTSGNLFHVA, LYTGAFSLLIVSTLFLVAGWLHLE, LNHHLSGLFGVSSLARAGHLVHVAI, IAHHHLAIAVVFIIAGHTY, LHFQLGLALASLGVVTSLVAQHMY, AALYTHHQYIAGFIMTGAFAHGAIFLT, AIISHLSWASLFLGFHTLGLYVH, and FPVHHAIASGLHTTTLILS. [4Fe-4S] cluster contacts are provided by Cys-559 and Cys-568. The next 2 membrane-spanning stretches (helical) occupy residues 575 to 596 and 643 to 665; these read AFYPAVFWMLNTIGWVTLHWHW and LSVWAWMFSFGHLVWATGFMFLI. Residues His-654, Met-662, and Tyr-670 each contribute to the chlorophyll a site. Phylloquinone is bound at residue Trp-671. A helical transmembrane segment spans residues 707 to 727; the sequence is LVGLAHFSVGYIFTYAAFPIP.

The protein belongs to the PsaA/PsaB family. As to quaternary structure, the PsaA/B heterodimer binds the P700 chlorophyll special pair and subsequent electron acceptors. PSI consists of a core antenna complex that captures photons, and an electron transfer chain that converts photonic excitation into a charge separation. The eukaryotic PSI reaction center is composed of at least 11 subunits. It depends on P700 is a chlorophyll a/chlorophyll a' dimer, A0 is one or more chlorophyll a, A1 is one or both phylloquinones and FX is a shared 4Fe-4S iron-sulfur center. as a cofactor.

It is found in the plastid. Its subcellular location is the chloroplast thylakoid membrane. The enzyme catalyses reduced [plastocyanin] + hnu + oxidized [2Fe-2S]-[ferredoxin] = oxidized [plastocyanin] + reduced [2Fe-2S]-[ferredoxin]. Its function is as follows. PsaA and PsaB bind P700, the primary electron donor of photosystem I (PSI), as well as the electron acceptors A0, A1 and FX. PSI is a plastocyanin-ferredoxin oxidoreductase, converting photonic excitation into a charge separation, which transfers an electron from the donor P700 chlorophyll pair to the spectroscopically characterized acceptors A0, A1, FX, FA and FB in turn. Oxidized P700 is reduced on the lumenal side of the thylakoid membrane by plastocyanin. This chain is Photosystem I P700 chlorophyll a apoprotein A2, found in Selaginella uncinata (Blue spike-moss).